An 895-amino-acid polypeptide reads, in one-letter code: La RNA-binding domain-containing protein LHP1 (895 aa).

Disordered stretches follow at residues 24–265 (ANGN…PPPS), 285–344 (SATS…HDAT), 359–590 (GEDK…LGHG), 796–857 (PDAA…AQDV), and 870–895 (VNGE…NYEQ). The segment covering 31-75 (SSPSSSSSATPEPTSLSSSTSGKKAFSTATSKSGQQKQGSSPQPG) has biased composition (low complexity). Positions 95 to 143 (QRTDRSEEKEKRGSSSKNWRERSHRDEKNQDDGEKRNGRERSKKEKGDK) are enriched in basic and acidic residues. The segment covering 152-170 (SATSSEKTAKSLSSSTKNA) has biased composition (low complexity). 2 stretches are compositionally biased toward polar residues: residues 172–184 (GVTS…NPIA) and 192–216 (KAQN…STIN). Positions 228 to 244 (DNWRARPAKVEKNEKTE) are enriched in basic and acidic residues. A compositionally biased stretch (low complexity) spans 251-260 (QAQPQPQRQL). The segment covering 296 to 314 (KSDKEKSLTNGMVKEEDSG) has biased composition (basic and acidic residues). Over residues 325–336 (AAAAAAAGTSST) the composition is skewed to low complexity. Composition is skewed to basic and acidic residues over residues 359-371 (GEDK…ERLN), 405-428 (HAAE…REGG), 452-468 (EGKK…DGHA), and 485-495 (GDVKETKEGDA). A compositionally biased stretch (low complexity) spans 496–508 (RSASQQESSSHRS). Residues 510–521 (PSISASANTGID) are compositionally biased toward polar residues. Residues 563 to 572 (RGSFGGGRAR) are compositionally biased toward gly residues. One can recognise an HTH La-type RNA-binding domain in the interval 706–796 (VPNLDPLRFY…GAESHRWVLP (91 aa)). Ser847 is modified (phosphoserine). The segment covering 873 to 884 (EIKEKEEVKAME) has biased composition (basic and acidic residues). Acidic residues predominate over residues 885-895 (NEGEESENYEQ).

In terms of biological role, may act as an RNA-binding protein. This is La RNA-binding domain-containing protein LHP1 from Cryptococcus neoformans var. grubii serotype A (strain H99 / ATCC 208821 / CBS 10515 / FGSC 9487) (Filobasidiella neoformans var. grubii).